The sequence spans 197 residues: Probable GTP-binding protein EngB (197 aa).

One can recognise an EngB-type G domain in the interval 22–195; sequence GYPEIALVGR…WNWIEAQAFG (174 aa). GTP is bound by residues 30–37, 57–61, 75–78, 142–145, and 174–176; these read GRSNVGKS, GKTQT, DVPG, TKSD, and FSA. 2 residues coordinate Mg(2+): serine 37 and threonine 59.

It belongs to the TRAFAC class TrmE-Era-EngA-EngB-Septin-like GTPase superfamily. EngB GTPase family. It depends on Mg(2+) as a cofactor.

Necessary for normal cell division and for the maintenance of normal septation. The polypeptide is Probable GTP-binding protein EngB (Levilactobacillus brevis (strain ATCC 367 / BCRC 12310 / CIP 105137 / JCM 1170 / LMG 11437 / NCIMB 947 / NCTC 947) (Lactobacillus brevis)).